The chain runs to 855 residues: Receptor-like protein kinase THESEUS 1 (855 aa).

A signal peptide spans 1-22; it reads MVFTKSLLVLLWFLSCYTTTTS. Residues 23-415 lie on the Extracellular side of the membrane; that stretch reads SALFNPPDNY…GGSGSKSKKK (393 aa). N-linked (GlcNAc...) asparagine glycosylation is found at asparagine 41, asparagine 64, asparagine 75, asparagine 114, asparagine 118, asparagine 136, asparagine 143, asparagine 154, asparagine 168, asparagine 225, asparagine 242, asparagine 288, asparagine 353, and asparagine 376. The chain crosses the membrane as a helical span at residues 416 to 436; sequence AVIIGSLVGAVTLILLIAVCC. The Cytoplasmic segment spans residues 437–855; it reads YCCLVASRKQ…FSQLVHPRGR (419 aa). In terms of domain architecture, Protein kinase spans 510–783; it reads FDESSLLGVG…GDVLWNLEYA (274 aa). ATP-binding positions include 516–524 and lysine 538; that span reads LGVGGFGRV. The active-site Proton acceptor is the aspartate 634. Residues 822 to 855 are disordered; the sequence is IDRGGVNSGTGTDDDAEDATTSAVFSQLVHPRGR.

This sequence belongs to the protein kinase superfamily. Ser/Thr protein kinase family. Autophosphorylated. In terms of tissue distribution, expressed in most vegetative tissues, including leaves, stems and roots, primarily in expanding cells and vascular tissue.

The protein resides in the cell membrane. In terms of biological role, receptor-like protein kinase required for cell elongation during vegetative growth, mostly in a brassinosteroid-(BR-) independent manner. Mediates the response of growing plant cells to the perturbation of cellulose synthesis and may act as a cell-wall-integrity sensor. Controls ectopic-lignin accumulation in cellulose-deficient mutant backgrounds. This is Receptor-like protein kinase THESEUS 1 (THE1) from Arabidopsis thaliana (Mouse-ear cress).